A 218-amino-acid polypeptide reads, in one-letter code: Keratin-associated protein 10-8 (218 aa).

The 16 X 5 AA repeats of C-C-X(3) stretch occupies residues 26 to 202 (CGNQVSSPSA…FCQPSCCHPA (177 aa)). 16 repeat units span residues 50–54 (CCEPT), 55–59 (CCAPS), 60–64 (CCAPA), 86–90 (CSSSS), 96–100 (CCVPV), 101–105 (CCRPV), 111–115 (CCRPV), 121–125 (CCTPV), 131–135 (CCRPV), 136–140 (CCRPV), 141–145 (CCRPV), 151–155 (CCRPM), 161–167 (PCSAPSS), 168–172 (CCRPS), 187–191 (CCVPT), and 198–202 (CCHPA).

This sequence belongs to the KRTAP type 10 family. As to quaternary structure, interacts with hair keratins.

In terms of biological role, in the hair cortex, hair keratin intermediate filaments are embedded in an interfilamentous matrix, consisting of hair keratin-associated proteins (KRTAP), which are essential for the formation of a rigid and resistant hair shaft through their extensive disulfide bond cross-linking with abundant cysteine residues of hair keratins. The matrix proteins include the high-sulfur and high-glycine-tyrosine keratins. This is Keratin-associated protein 10-8 from Bos taurus (Bovine).